The sequence spans 713 residues: Pheromone-processing carboxypeptidase KEX1 (713 aa).

The N-terminal stretch at 1 to 22 is a signal peptide; sequence MMVSYKLLSLITLLFVAQCTTG. The Lumenal portion of the chain corresponds to 23–616; that stretch reads LLKQDDYVVR…ESETKTHPKA (594 aa). Active-site residues include Ser-196 and Asp-404. N-linked (GlcNAc...) asparagine glycans are attached at residues Asn-457 and Asn-465. The active site involves His-468. The tract at residues 500–612 is disordered; that stretch reads DVLISTNEPT…DDKSESETKT (113 aa). Residues 512–522 show a composition bias toward acidic residues; the sequence is DIEEEELDGEK. The segment covering 523–552 has biased composition (basic and acidic residues); the sequence is EDEKDGVTEGDGEKSDTDEGKDTDKGKDEK. Residues 553–601 are compositionally biased toward acidic residues; sequence NDDDDDDDDDSDDDSDDDDDDDDDDDDDDDDDDDSDDDDDDDDDSDDNE. Basic and acidic residues predominate over residues 602 to 612; the sequence is KDDKSESETKT. A helical membrane pass occupies residues 617–637; it reads KIALLLLLFISVFGITGSQAL. Topologically, residues 638 to 713 are cytoplasmic; the sequence is RQRNFQFRRA…IDESFELAEI (76 aa). The segment at 650-696 is disordered; it reads TSNSFSSSSSPNDPSNWDSNDDFDFDIENDPLPSTNNKHKAAKKKKD. A compositionally biased stretch (low complexity) spans 651–667; sequence SNSFSSSSSPNDPSNWD. Residues 668-678 are compositionally biased toward acidic residues; sequence SNDDFDFDIEN. Positions 686 to 695 are enriched in basic residues; it reads NKHKAAKKKK.

It belongs to the peptidase S10 family.

The protein localises to the golgi apparatus. Its subcellular location is the trans-Golgi network membrane. It catalyses the reaction Preferential release of a C-terminal arginine or lysine residue.. Protease with a carboxypeptidase B-like function involved in the C-terminal processing of the lysine and arginine residues from protein precursors. Promotes cell fusion and is involved in the programmed cell death. The sequence is that of Pheromone-processing carboxypeptidase KEX1 (KEX1) from Vanderwaltozyma polyspora (strain ATCC 22028 / DSM 70294 / BCRC 21397 / CBS 2163 / NBRC 10782 / NRRL Y-8283 / UCD 57-17) (Kluyveromyces polysporus).